We begin with the raw amino-acid sequence, 204 residues long: Large ribosomal subunit protein bL25 (204 aa).

It belongs to the bacterial ribosomal protein bL25 family. CTC subfamily. In terms of assembly, part of the 50S ribosomal subunit; part of the 5S rRNA/L5/L18/L25 subcomplex. Contacts the 5S rRNA. Binds to the 5S rRNA independently of L5 and L18.

This is one of the proteins that binds to the 5S RNA in the ribosome where it forms part of the central protuberance. The protein is Large ribosomal subunit protein bL25 of Pseudomonas paraeruginosa (strain DSM 24068 / PA7) (Pseudomonas aeruginosa (strain PA7)).